Consider the following 206-residue polypeptide: MTQKNGPLRIGIGGPVGSGKTTLTEKLCKALRDKYSVAVITNDIYTQEDALILARSQALSEDRIMGVETGGCPHTAIREDASINLQAIAEMNRRFPDLEIVFIESGGDNLAATFSPDLADLTLYVISVCQGEEIPRKGGPGITRSDFLVINKSDLAPHVHVDLDIMQGDAARMRGKRPFGFTDLHRGKGVPEIIDFIVENGGLEAR.

Residue 14–21 (GPVGSGKT) coordinates GTP.

The protein belongs to the SIMIBI class G3E GTPase family. UreG subfamily. As to quaternary structure, homodimer. UreD, UreF and UreG form a complex that acts as a GTP-hydrolysis-dependent molecular chaperone, activating the urease apoprotein by helping to assemble the nickel containing metallocenter of UreC. The UreE protein probably delivers the nickel.

The protein resides in the cytoplasm. In terms of biological role, facilitates the functional incorporation of the urease nickel metallocenter. This process requires GTP hydrolysis, probably effectuated by UreG. This is Urease accessory protein UreG from Brucella anthropi (strain ATCC 49188 / DSM 6882 / CCUG 24695 / JCM 21032 / LMG 3331 / NBRC 15819 / NCTC 12168 / Alc 37) (Ochrobactrum anthropi).